A 168-amino-acid chain; its full sequence is Large ribosomal subunit protein bL9 (168 aa).

Residues 149–168 (QSFEEEPAPEAPAEEAEAAE) form a disordered region. The segment covering 152-168 (EEEPAPEAPAEEAEAAE) has biased composition (acidic residues).

It belongs to the bacterial ribosomal protein bL9 family.

Binds to the 23S rRNA. This chain is Large ribosomal subunit protein bL9, found in Desulfovibrio desulfuricans (strain ATCC 27774 / DSM 6949 / MB).